The primary structure comprises 633 residues: Keratin, type II cytoskeletal 2 epidermal (633 aa).

A head region spans residues 1-189 (MSCQISCKSR…DPEIQNVKSQ (189 aa)). Arg-18 bears the Asymmetric dimethylarginine mark. Ser-21, Ser-24, and Ser-60 each carry phosphoserine. The interval 190-225 (EREQIKTLNNKFASFIDKVRFLEQQNQVLQTKWELL) is coil 1A. One can recognise an IF rod domain in the interval 190 to 503 (EREQIKTLNN…KLLEGEECRM (314 aa)). The linker 1 stretch occupies residues 226–244 (QQLDVSTRTTNLEPIFQAY). The segment at 245 to 336 (IAKLKKYVDT…FLFDXELSQM (92 aa)) is coil 1B. Positions 337–360 (QTQISETNVTLSMDNNRSLDLDSI) are linker 12. The segment at 361–499 (ISEVKAQYEE…ATYRKLLEGE (139 aa)) is coil 2. The segment at 500–633 (ECRMSGDLSS…SGSSVTFSFR (134 aa)) is tail. Residues 518–527 (SSMSSSMTSR) are compositionally biased toward low complexity. The segment at 518–633 (SSMSSSMTSR…SGSSVTFSFR (116 aa)) is disordered. Residues 528 to 613 (GGFGGYGSGG…GYGSGGGSRG (86 aa)) are compositionally biased toward gly residues. An omega-N-methylarginine mark is found at Arg-588 and Arg-612.

It belongs to the intermediate filament family. In terms of assembly, heterotetramer of two type I and two type II keratins. Associates with KRT10.

Its subcellular location is the cytoplasm. In terms of biological role, probably contributes to terminal cornification. Associated with keratinocyte activation, proliferation and keratinization. Required for maintenance of corneocytes and keratin filaments in suprabasal keratinocytes in the epidermis of the ear, potentially via moderation of expression and localization of keratins and their partner proteins. Plays a role in the establishment of the epidermal barrier on plantar skin. The chain is Keratin, type II cytoskeletal 2 epidermal (KRT2) from Canis lupus familiaris (Dog).